Reading from the N-terminus, the 285-residue chain is Probable endonuclease 4 (285 aa).

Residues His-69, His-109, Glu-145, Asp-179, His-182, His-216, Asp-229, His-231, and Glu-261 each coordinate Zn(2+).

This sequence belongs to the AP endonuclease 2 family. The cofactor is Zn(2+).

The catalysed reaction is Endonucleolytic cleavage to 5'-phosphooligonucleotide end-products.. Its function is as follows. Endonuclease IV plays a role in DNA repair. It cleaves phosphodiester bonds at apurinic or apyrimidinic (AP) sites, generating a 3'-hydroxyl group and a 5'-terminal sugar phosphate. In Yersinia pestis bv. Antiqua (strain Antiqua), this protein is Probable endonuclease 4.